A 127-amino-acid polypeptide reads, in one-letter code: Odontogenesis-associated phosphoprotein (127 aa).

A signal peptide spans 1–23 (MAPGFHFSWLLVSWLVVTTVKGQ).

In terms of tissue distribution, expressed in enamel organs and not expressed in the heart, kidney, or spleen.

The protein localises to the secreted. In terms of biological role, may promote nucleation of hydroxyapatite. This chain is Odontogenesis-associated phosphoprotein, found in Rattus norvegicus (Rat).